The following is a 345-amino-acid chain: Phosphoribosylformylglycinamidine cyclo-ligase (345 aa).

It belongs to the AIR synthase family.

Its subcellular location is the cytoplasm. The catalysed reaction is 2-formamido-N(1)-(5-O-phospho-beta-D-ribosyl)acetamidine + ATP = 5-amino-1-(5-phospho-beta-D-ribosyl)imidazole + ADP + phosphate + H(+). It functions in the pathway purine metabolism; IMP biosynthesis via de novo pathway; 5-amino-1-(5-phospho-D-ribosyl)imidazole from N(2)-formyl-N(1)-(5-phospho-D-ribosyl)glycinamide: step 2/2. The protein is Phosphoribosylformylglycinamidine cyclo-ligase of Shewanella baltica (strain OS223).